We begin with the raw amino-acid sequence, 324 residues long: Holliday junction branch migration complex subunit RuvB (324 aa).

The interval 1-168 (MEDLALRPKT…FGIVEHLEYY (168 aa)) is large ATPase domain (RuvB-L). Tyrosine 14, isoleucine 15, glycine 48, lysine 51, threonine 52, threonine 53, aspartate 97, threonine 146, tyrosine 168, and arginine 205 together coordinate ATP. Threonine 52 contributes to the Mg(2+) binding site. The small ATPAse domain (RuvB-S) stretch occupies residues 169–239 (TPEELAQGVM…RALEALAALG (71 aa)). A head domain (RuvB-H) region spans residues 242 to 324 (ELGLEKRDRE…PPPVGPLLEP (83 aa)). DNA contacts are provided by arginine 297 and arginine 302.

This sequence belongs to the RuvB family. In terms of assembly, homohexamer. Forms a complex with RuvA. Electron microscopic images suggest 2 closely interacting RuvA tetramers sandwich the HJ DNA; each tetramer associates with an RuvB hexamer. Forms 2 complexes with Holliday junction (HJ) DNA which probably have 1 and 2 RuvA tetramers per complex (called complex I and complex II). Forms an RuvA(8)-RuvB(12)-Holliday junction (HJ) complex. HJ DNA is sandwiched between 2 RuvA tetramers; dsDNA enters through RuvA and exits via RuvB. An RuvB hexamer assembles on each DNA strand where it exits the tetramer. Each RuvB hexamer is contacted by two RuvA subunits (via domain III) on 2 adjacent RuvB subunits; this complex drives branch migration. In the full resolvosome a probable DNA-RuvA(4)-RuvB(12)-RuvC(2) complex forms which resolves the HJ. It depends on Mg(2+) as a cofactor.

It localises to the cytoplasm. It catalyses the reaction ATP + H2O = ADP + phosphate + H(+). The activity of RuvB is enhanced by E.coli RuvA. The RuvA-RuvB-RuvC complex processes Holliday junction (HJ) DNA during genetic recombination and DNA repair, while the RuvA-RuvB complex plays an important role in the rescue of blocked DNA replication forks via replication fork reversal (RFR). RuvA specifically binds to HJ cruciform DNA, conferring on it an open structure. The RuvB hexamer acts as an ATP-dependent pump, pulling dsDNA into and through the RuvAB complex. RuvB forms 2 homohexamers on either side of HJ DNA bound by 1 or 2 RuvA tetramers; 4 subunits per hexamer contact DNA at a time. Coordinated motions by a converter formed by DNA-disengaged RuvB subunits stimulates ATP hydrolysis and nucleotide exchange. Immobilization of the converter enables RuvB to convert the ATP-contained energy into a lever motion, pulling 2 nucleotides of DNA out of the RuvA tetramer per ATP hydrolyzed, thus driving DNA branch migration. The RuvB motors rotate together with the DNA substrate, which together with the progressing nucleotide cycle form the mechanistic basis for DNA recombination by continuous HJ branch migration. Branch migration allows RuvC to scan DNA until it finds its consensus sequence, where it cleaves and resolves cruciform DNA. In terms of biological role, ruvB is a Mg(2+)-dependent, DNA-dependent ATPase with an equal preference for supercoiled and linear dsDNA; all (d)NTPs tested were efficiently hydrolyzed. Promotes Holliday junction (HJ) dissociation at 60 degrees Celsius in the presence of ATP but not ATP-gamma-S or ADP; (d)ATP, (d)CTP and dTTP also power dissociation in the absence of any RuvA. RuvA stimulates the ATPase of RuvB in the presence of dsDNA and HJ branch migration by RuvB. Excess RuvB stimulates some branch migration in vitro even in the presence of mutant RuvA. The protein is Holliday junction branch migration complex subunit RuvB of Thermus thermophilus (strain ATCC 27634 / DSM 579 / HB8).